The sequence spans 383 residues: Insecticidal crystal protein Cry35Ab1 (383 aa).

One can recognise a Ricin B-type lectin domain in the interval 26–138 (DDSGVSLMNK…NNPNQQWNLT (113 aa)).

It belongs to the toxin_10 family. As to quaternary structure, monomer in solution. Copurifies from parasporal inclusion bodies with Cry34Ab1. In terms of processing, proteolytic processing occurs near the C-terminus yielding a stable protein of approximately 40 kDa; this may be the active form of the protein.

Its function is as follows. Component of a binary insecticidal toxin active on western corn rootworm (WCR, Diabrotica virgifera subsp. virgifera Le Conte) and probably also on northern corn rootworm (D.barberi). Both proteins are required for maximal toxicity. The larval midgut epithelium is probably the primary target. This protein alone has no activity against southern corn rootworm (Diabrotica undecimpunctata howardi Barber), but it synergizes the toxic effect of its Cry34Ab1 partner. The 2 proteins individually and together form ion channels; channels made in the presence of the 2 proteins have higher conductance. Binds to WCR third instar midgut brush border membrane vesicles; binding improves over 10-fold in the presence of Cry34Ab1. This is Insecticidal crystal protein Cry35Ab1 from Bacillus thuringiensis.